We begin with the raw amino-acid sequence, 348 residues long: Holliday junction branch migration complex subunit RuvB (348 aa).

Residues 1 to 10 (MAIVSSSSGR) show a composition bias toward low complexity. The interval 1-37 (MAIVSSSSGRKPPRRPEALMDPQQAPEEVVSRPEDKL) is disordered. Residues 13–198 (PRRPEALMDP…FGLIQRLEFY (186 aa)) form a large ATPase domain (RuvB-L) region. The ATP site is built by Leu37, Arg38, Gly79, Lys82, Thr83, Thr84, Arg188, Tyr198, and Arg235. Thr83 serves as a coordination point for Mg(2+). The small ATPAse domain (RuvB-S) stretch occupies residues 199–271 (GQGDLEAIVE…LVGEALSLHR (73 aa)). The head domain (RuvB-H) stretch occupies residues 274–348 (HRGLDASDRR…AARSHLAEAA (75 aa)). Residues Arg329 and Arg334 each contribute to the DNA site.

The protein belongs to the RuvB family. In terms of assembly, homohexamer. Forms an RuvA(8)-RuvB(12)-Holliday junction (HJ) complex. HJ DNA is sandwiched between 2 RuvA tetramers; dsDNA enters through RuvA and exits via RuvB. An RuvB hexamer assembles on each DNA strand where it exits the tetramer. Each RuvB hexamer is contacted by two RuvA subunits (via domain III) on 2 adjacent RuvB subunits; this complex drives branch migration. In the full resolvosome a probable DNA-RuvA(4)-RuvB(12)-RuvC(2) complex forms which resolves the HJ.

The protein resides in the cytoplasm. It catalyses the reaction ATP + H2O = ADP + phosphate + H(+). Functionally, the RuvA-RuvB-RuvC complex processes Holliday junction (HJ) DNA during genetic recombination and DNA repair, while the RuvA-RuvB complex plays an important role in the rescue of blocked DNA replication forks via replication fork reversal (RFR). RuvA specifically binds to HJ cruciform DNA, conferring on it an open structure. The RuvB hexamer acts as an ATP-dependent pump, pulling dsDNA into and through the RuvAB complex. RuvB forms 2 homohexamers on either side of HJ DNA bound by 1 or 2 RuvA tetramers; 4 subunits per hexamer contact DNA at a time. Coordinated motions by a converter formed by DNA-disengaged RuvB subunits stimulates ATP hydrolysis and nucleotide exchange. Immobilization of the converter enables RuvB to convert the ATP-contained energy into a lever motion, pulling 2 nucleotides of DNA out of the RuvA tetramer per ATP hydrolyzed, thus driving DNA branch migration. The RuvB motors rotate together with the DNA substrate, which together with the progressing nucleotide cycle form the mechanistic basis for DNA recombination by continuous HJ branch migration. Branch migration allows RuvC to scan DNA until it finds its consensus sequence, where it cleaves and resolves cruciform DNA. In Synechococcus sp. (strain CC9605), this protein is Holliday junction branch migration complex subunit RuvB.